The sequence spans 225 residues: LysM and putative peptidoglycan-binding domain-containing protein 1 (225 aa).

Ser23 and Ser33 each carry phosphoserine. The LysM domain maps to 40-84; the sequence is LEHQLAPGDTLAGLALKYGVTMEQIKRANRLYTNDSIFLKKTLHI. The segment at 97 to 153 is disordered; sequence LDSEEEKDGEEAVQPSKDEVRPHSAERKKRERGLGHANGEPLPTAGQEPARHDLSAS. Acidic residues predominate over residues 98–107; the sequence is DSEEEKDGEE. Ser99 bears the Phosphoserine mark. Basic and acidic residues predominate over residues 112-121; that stretch reads SKDEVRPHSA. Residues Ser164, Ser179, Ser192, and Ser210 each carry the phosphoserine modification. The segment at 170–225 is disordered; it reads AAQKLKKGESGIPGEDSSLHLSSPRMQQRAVLGPVPLTQTSRTRTLRDQEDEIFKL. The segment covering 214–225 has biased composition (basic and acidic residues); sequence TLRDQEDEIFKL.

In Bos taurus (Bovine), this protein is LysM and putative peptidoglycan-binding domain-containing protein 1 (LYSMD1).